Consider the following 403-residue polypeptide: Cytoplasmic tRNA 2-thiolation protein 2 (403 aa).

This sequence belongs to the CTU2/NCS2 family.

The protein resides in the cytoplasm. It functions in the pathway tRNA modification; 5-methoxycarbonylmethyl-2-thiouridine-tRNA biosynthesis. Plays a central role in 2-thiolation of mcm(5)S(2)U at tRNA wobble positions of tRNA(Lys), tRNA(Glu) and tRNA(Gln). May act by forming a heterodimer with NCS6/CTU1 that ligates sulfur from thiocarboxylated URM1 onto the uridine of tRNAs at wobble position. The sequence is that of Cytoplasmic tRNA 2-thiolation protein 2 from Drosophila ananassae (Fruit fly).